The primary structure comprises 503 residues: Lanosterol 14-alpha demethylase (503 aa).

The helical transmembrane segment at 24 to 44 (GNLLSTLLIACAFTLSLVYLF) threads the bilayer. Cys449 contributes to the heme binding site.

This sequence belongs to the cytochrome P450 family. Heme is required as a cofactor. In terms of processing, ubiquitinated by MARCHF6, leading to proteasomal degradation.

The protein localises to the endoplasmic reticulum membrane. The protein resides in the microsome membrane. The catalysed reaction is a 14alpha-methyl steroid + 3 reduced [NADPH--hemoprotein reductase] + 3 O2 = a Delta(14) steroid + formate + 3 oxidized [NADPH--hemoprotein reductase] + 4 H2O + 4 H(+). It catalyses the reaction lanosterol + 3 reduced [NADPH--hemoprotein reductase] + 3 O2 = 4,4-dimethyl-5alpha-cholesta-8,14,24-trien-3beta-ol + formate + 3 oxidized [NADPH--hemoprotein reductase] + 4 H2O + 4 H(+). The enzyme catalyses 24,25-dihydrolanosterol + 3 reduced [NADPH--hemoprotein reductase] + 3 O2 = 4,4-dimethyl-8,14-cholestadien-3beta-ol + formate + 3 oxidized [NADPH--hemoprotein reductase] + 4 H2O + 4 H(+). It carries out the reaction a 14alpha-methyl steroid + reduced [NADPH--hemoprotein reductase] + O2 = a 14alpha-hydroxymethyl steroid + oxidized [NADPH--hemoprotein reductase] + H2O + H(+). The catalysed reaction is a 14alpha-hydroxymethyl steroid + reduced [NADPH--hemoprotein reductase] + O2 = a 14alpha-formyl steroid + oxidized [NADPH--hemoprotein reductase] + 2 H2O + H(+). It catalyses the reaction a 14alpha-formyl steroid + reduced [NADPH--hemoprotein reductase] + O2 = a Delta(14) steroid + formate + oxidized [NADPH--hemoprotein reductase] + H2O + 2 H(+). The enzyme catalyses lanosterol + reduced [NADPH--hemoprotein reductase] + O2 = 32-hydroxylanosterol + oxidized [NADPH--hemoprotein reductase] + H2O + H(+). It carries out the reaction 32-hydroxylanosterol + reduced [NADPH--hemoprotein reductase] + O2 = 32-oxolanosterol + oxidized [NADPH--hemoprotein reductase] + 2 H2O + H(+). The catalysed reaction is 32-oxolanosterol + reduced [NADPH--hemoprotein reductase] + O2 = 4,4-dimethyl-5alpha-cholesta-8,14,24-trien-3beta-ol + formate + oxidized [NADPH--hemoprotein reductase] + H2O + 2 H(+). It catalyses the reaction 24,25-dihydrolanosterol + reduced [NADPH--hemoprotein reductase] + O2 = 32-hydroxy-24,25-dihydrolanosterol + oxidized [NADPH--hemoprotein reductase] + H2O + H(+). The enzyme catalyses 32-hydroxy-24,25-dihydrolanosterol + reduced [NADPH--hemoprotein reductase] + O2 = 32-oxo-24,25-dihydrolanosterol + oxidized [NADPH--hemoprotein reductase] + 2 H2O + H(+). It carries out the reaction 32-oxo-24,25-dihydrolanosterol + reduced [NADPH--hemoprotein reductase] + O2 = 4,4-dimethyl-8,14-cholestadien-3beta-ol + formate + oxidized [NADPH--hemoprotein reductase] + H2O + 2 H(+). It functions in the pathway steroid biosynthesis; zymosterol biosynthesis; zymosterol from lanosterol: step 1/6. Inhibited by azalanstat. Inhibited by azole antifungal agents ketoconazole, itraconazole and fluconazole. In terms of biological role, sterol 14alpha-demethylase that plays a critical role in the cholesterol biosynthesis pathway, being cholesterol the major sterol component in mammalian membranes as well as a precursor for bile acid and steroid hormone synthesis. Cytochrome P450 monooxygenase that catalyzes the three-step oxidative removal of the 14alpha-methyl group (C-32) of sterols such as lanosterol (lanosta-8,24-dien-3beta-ol) and 24,25-dihydrolanosterol (DHL) in the form of formate, and converts the sterols to 4,4-dimethyl-5alpha-cholesta-8,14,24-trien-3beta-ol and 4,4-dimethyl-8,14-cholestadien-3beta-ol, respectively, which are intermediates of cholesterol biosynthesis. Can also demethylate substrates not intrinsic to mammals, such as eburicol (24-methylene-24,25-dihydrolanosterol), but at a lower rate than DHL. The protein is Lanosterol 14-alpha demethylase of Mus musculus (Mouse).